The following is a 445-amino-acid chain: Reticulon-4 receptor-like 1 (445 aa).

The signal sequence occupies residues 1–24 (MLRKGCCVELLLLLLAGELPLGGG). Positions 25–54 (CPRDCVCYPAPMTVSCQAHNFAAIPEGIPE) constitute an LRRNT domain. 8 LRR repeats span residues 55–76 (DSER…HFSP), 77–98 (AMVT…TFEG), 101–123 (HLEE…TFQG), 126–147 (KLHA…IFGG), 150–171 (SLQY…IFVD), 174–195 (NLSH…IFRG), 198–219 (NLDR…AFHD), and 222–243 (RLTT…CLAP). One can recognise an LRRCT domain in the interval 255-306 (NAWDCGCRARSLWEWLRRFRGSSSAVPCATPELRQGQDLKLLRVEDFRNCTG). Disordered stretches follow at residues 307–377 (PVSP…SGKE) and 401–424 (RPKR…QQAS). Composition is skewed to basic residues over residues 352–366 (GYKK…HRNR) and 401–413 (RPKR…RRTP). The GPI-anchor amidated serine moiety is linked to residue serine 424. A helical membrane pass occupies residues 424 to 444 (SSGTALGAPLLAWILGLAVTL). The propeptide at 425–445 (SGTALGAPLLAWILGLAVTLR) is removed in mature form.

The protein belongs to the Nogo receptor family. In terms of assembly, identified in a complex that contains RTN4R, RTN4RL1 and NGFR; the interaction depends on the presence of chondroitin sulfate proteoglycans. Does not interact with MAG, OMG and RTN4. In terms of tissue distribution, detected in brain (at protein level). Detected in retina ganglion cell layer and inner nuclear layer.

Its subcellular location is the cell membrane. The protein localises to the membrane raft. It localises to the perikaryon. The protein resides in the cell projection. Cell surface receptor that plays a functionally redundant role in postnatal brain development and in regulating axon regeneration in the adult central nervous system. Contributes to normal axon migration across the brain midline and normal formation of the corpus callosum. Protects motoneurons against apoptosis; protection against apoptosis is probably mediated by MAG. Plays a role in inhibiting neurite outgrowth and axon regeneration via its binding to neuronal chondroitin sulfate proteoglycans. Binds heparin. Like other family members, plays a role in restricting the number dendritic spines and the number of synapses that are formed during brain development. Signaling mediates activation of Rho and downstream reorganization of the actin cytoskeleton. The sequence is that of Reticulon-4 receptor-like 1 from Mus musculus (Mouse).